The following is a 286-amino-acid chain: Diaminopimelate epimerase (286 aa).

N13 and N66 together coordinate substrate. Catalysis depends on C75, which acts as the Proton donor. Substrate is bound by residues 76-77 (GN), N165, N198, and 216-217 (ER). C225 functions as the Proton acceptor in the catalytic mechanism. Residue 226-227 (GT) participates in substrate binding.

The protein belongs to the diaminopimelate epimerase family. As to quaternary structure, homodimer.

The protein localises to the cytoplasm. It carries out the reaction (2S,6S)-2,6-diaminopimelate = meso-2,6-diaminopimelate. It participates in amino-acid biosynthesis; L-lysine biosynthesis via DAP pathway; DL-2,6-diaminopimelate from LL-2,6-diaminopimelate: step 1/1. Catalyzes the stereoinversion of LL-2,6-diaminopimelate (L,L-DAP) to meso-diaminopimelate (meso-DAP), a precursor of L-lysine and an essential component of the bacterial peptidoglycan. This chain is Diaminopimelate epimerase, found in Oceanobacillus iheyensis (strain DSM 14371 / CIP 107618 / JCM 11309 / KCTC 3954 / HTE831).